The primary structure comprises 526 residues: Phosphoenolpyruvate carboxylase (526 aa).

The protein belongs to the PEPCase type 2 family. Homotetramer. Mg(2+) serves as cofactor.

The enzyme catalyses oxaloacetate + phosphate = phosphoenolpyruvate + hydrogencarbonate. Catalyzes the irreversible beta-carboxylation of phosphoenolpyruvate (PEP) to form oxaloacetate (OAA), a four-carbon dicarboxylic acid source for the tricarboxylic acid cycle. This is Phosphoenolpyruvate carboxylase from Methanosarcina barkeri (strain Fusaro / DSM 804).